A 490-amino-acid polypeptide reads, in one-letter code: Protein LMBR1L (490 aa).

Residues 1-21 (MEAPDYEVLSVREQLFHERIR) are Extracellular-facing. Residues 1–59 (MEAPDYEVLSVREQLFHERIRECIISTLLFATLYILCHIFLTRFKKPAEFTTVDDEDAT) form an interaction with LGB region. The interval 1–76 (MEAPDYEVLS…LCTFTLAIAL (76 aa)) is LCN1-binding. A helical transmembrane segment spans residues 22-42 (ECIISTLLFATLYILCHIFLT). Over 43–66 (RFKKPAEFTTVDDEDATVNKIALE) the chain is Cytoplasmic. The helical transmembrane segment at 67–87 (LCTFTLAIALGAVLLLPFSII) threads the bilayer. The Extracellular segment spans residues 88–114 (SNEVLLSLPRNYYIQWLNGSLIHGLWN). The chain crosses the membrane as a helical span at residues 115–135 (LVFLFSNLSLIFLMPFAYFFT). Over 136–154 (ESEGFAGSRRGVLGRVYET) the chain is Cytoplasmic. A helical transmembrane segment spans residues 155-175 (VVMLMLLTLLVLGMVWVASAI). Topologically, residues 176 to 196 (LDNNKASRESLYDFWEYYLPY) are extracellular. The chain crosses the membrane as a helical span at residues 197–217 (LYSCISFLGVLLLLVCTPLGL). Residues 218-305 (ARMFSVTGKL…NLGYPLAMLC (88 aa)) lie on the Cytoplasmic side of the membrane. Residues 306–326 (LLVLTGLSVLIVAIHILELLI) form a helical membrane-spanning segment. Over 327-350 (DEAAMPRGMQDASLGQVSFSRLGS) the chain is Extracellular. The chain crosses the membrane as a helical span at residues 351–371 (FGAVIQVALIFYLMVSSVVGF). The Cytoplasmic portion of the chain corresponds to 372–388 (YSSPLFRSLRPRWHDTA). Residues 389–409 (MTQIIGNCVCLLVLSSALPVF) traverse the membrane as a helical segment. Over 410–431 (SRTLGLTRFDLLGDFGRFNWLG) the chain is Extracellular. Residues 432–452 (NFYIVFLYNAAFAGLTTLCLV) form a helical membrane-spanning segment. Residues 453 to 490 (KTFTAAVRAELIRAFGLDRLPLPVSGFPPRASRKTQHQ) are Cytoplasmic-facing.

The protein belongs to the LIMR family. As to quaternary structure, dimer. Can also form higher oligomers. Interacts with LCN1; this interaction mediates the endocytosis of LCN1. Interacts with UBAC2, FAF2, VCP, AMFR, ZNRF3, CTNNB1, LRP6, GSK3A, GSK3B, FZD6, DVL2 and RNF43. Interaction with LGB and SCGB1A1 is controversial.

Its subcellular location is the cell membrane. It is found in the endoplasmic reticulum membrane. Functionally, plays an essential role in lymphocyte development by negatively regulating the canonical Wnt signaling pathway. In association with UBAC2 and E3 ubiquitin-protein ligase AMFR, promotes the ubiquitin-mediated degradation of CTNNB1 and Wnt receptors FZD6 and LRP6. LMBR1L stabilizes the beta-catenin destruction complex that is required for regulating CTNNB1 levels. Acts as a LCN1 receptor and can mediate its endocytosis. The polypeptide is Protein LMBR1L (LMBR1L) (Pongo abelii (Sumatran orangutan)).